We begin with the raw amino-acid sequence, 651 residues long: Intraflagellar transport protein 70A (651 aa).

7 TPR repeats span residues 8–41 (DGEY…QYRS), 42–75 (RAGL…TPEV), 140–173 (PESE…MGYK), 175–207 (DLSY…GIRE), 372–405 (LTEQ…YDET), 410–443 (IPVL…CNEH), and 445–478 (IWKL…HYDN). Positions 494-521 (YIMTSQNEEAEELMRKIEKEEEQIAYEN) form a coiled coil. The TPR 8 repeat unit spans residues 530 to 563 (CIVNLVIGTLYCAKGNYEFGISRVIKSLEPYNKK).

The protein belongs to the TTC30/dfy-1/fleer family.

The protein localises to the cell projection. It is found in the cilium. In terms of biological role, required for polyglutamylation of axonemal tubulin. Plays a role in anterograde intraflagellar transport (IFT), the process by which cilia precursors are transported from the base of the cilium to the site of their incorporation at the tip. In Xenopus tropicalis (Western clawed frog), this protein is Intraflagellar transport protein 70A (ift70a).